We begin with the raw amino-acid sequence, 296 residues long: Protein csh3 (296 aa).

Positions 46–138 are disordered; it reads ASPVTAPAAQ…PPSYPGPNTA (93 aa). A compositionally biased stretch (basic and acidic residues) spans 93–103; sequence GEKRTPEEPRK. The segment covering 111 to 124 has biased composition (polar residues); that stretch reads QKQSEASSVNSSTE. Residues 140 to 199 form the SH3 domain; sequence KNVERVLAMYDFPGPDAGDLGFHAGEVIIVLEHVNNDWWRGELNGKEGIFPSNYVRLLED. The interval 202–246 is disordered; sequence VKAQPPPPPPQQNYPPAASSSAPPMQYQQTAYPPQQAPYPPVQAY. Residues 205–214 are compositionally biased toward pro residues; the sequence is QPPPPPPQQN. Positions 215–235 are enriched in low complexity; the sequence is YPPAASSSAPPMQYQQTAYPP.

In Schizosaccharomyces pombe (strain 972 / ATCC 24843) (Fission yeast), this protein is Protein csh3 (csh3).